The following is a 449-amino-acid chain: Elongation factor 1-alpha C (449 aa).

Residues 5–234 (KQHVSIVVIG…DACDPPKRPV (230 aa)) enclose the tr-type G domain. The interval 14-21 (GHVDSGKS) is G1. Residue 14-21 (GHVDSGKS) participates in GTP binding. K55 carries the N6,N6-dimethyllysine modification. A G2 region spans residues 70–74 (GITID). K79 bears the N6,N6,N6-trimethyllysine mark. Positions 91-94 (DAPG) are G3. Residues 91–95 (DAPGH) and 153–156 (NKMD) contribute to the GTP site. The segment at 153–156 (NKMD) is G4. K187 is subject to N6,N6,N6-trimethyllysine. A G5 region spans residues 194-196 (SGW). Position 265 is an N6-methyllysine (K265). An N6,N6,N6-trimethyllysine mark is found at K310 and K400.

Belongs to the TRAFAC class translation factor GTPase superfamily. Classic translation factor GTPase family. EF-Tu/EF-1A subfamily.

The protein resides in the cytoplasm. In terms of biological role, this protein promotes the GTP-dependent binding of aminoacyl-tRNA to the A-site of ribosomes during protein biosynthesis. The sequence is that of Elongation factor 1-alpha C (TEF-C) from Porphyra purpurea (Red seaweed).